The chain runs to 157 residues: S-ribosylhomocysteine lyase (157 aa).

H54, H58, and C126 together coordinate Fe cation.

It belongs to the LuxS family. In terms of assembly, homodimer. Fe cation serves as cofactor.

The catalysed reaction is S-(5-deoxy-D-ribos-5-yl)-L-homocysteine = (S)-4,5-dihydroxypentane-2,3-dione + L-homocysteine. Involved in the synthesis of autoinducer 2 (AI-2) which is secreted by bacteria and is used to communicate both the cell density and the metabolic potential of the environment. The regulation of gene expression in response to changes in cell density is called quorum sensing. Catalyzes the transformation of S-ribosylhomocysteine (RHC) to homocysteine (HC) and 4,5-dihydroxy-2,3-pentadione (DPD). In Bacillus cereus (strain G9842), this protein is S-ribosylhomocysteine lyase.